The following is a 281-amino-acid chain: sn-glycerol-3-phosphate transport system permease protein UgpE (281 aa).

Transmembrane regions (helical) follow at residues 14 to 34, 85 to 105, 113 to 133, 142 to 162, 201 to 221, and 247 to 267; these read IMLIIGVLLILFPLYVAFVAA, FAITVGKITVSILSAYAIVYF, FFWLIFLTLMLPVEVRIFPTI, LDSYTGLTLPLMASATATFLF, AALFVITFIYGWNQYLWPILI, and WNQVMAAMILTLIPPVVVVLL. Residues 77 to 268 enclose the ABC transmembrane type-1 domain; the sequence is LLNSFVMAFA…IPPVVVVLLM (192 aa).

Belongs to the binding-protein-dependent transport system permease family. UgpAE subfamily. In terms of assembly, the complex is composed of two ATP-binding proteins (UgpC), two transmembrane proteins (UgpA and UgpE) and a solute-binding protein (UgpB).

It localises to the cell inner membrane. In terms of biological role, part of the ABC transporter complex UgpBAEC involved in sn-glycerol-3-phosphate (G3P) import. Probably responsible for the translocation of the substrate across the membrane. The chain is sn-glycerol-3-phosphate transport system permease protein UgpE (ugpE) from Yersinia pestis bv. Antiqua (strain Antiqua).